A 750-amino-acid polypeptide reads, in one-letter code: Meiosis protein mei2 (750 aa).

Residues 1–20 (MIMETESPLSITSPSPSDST) are disordered. Residues 7-20 (SPLSITSPSPSDST) are compositionally biased toward polar residues. 2 consecutive RRM domains span residues 195-270 (RYLF…FCQR) and 293-361 (LLLN…CLQV).

Binds rad24 when phosphorylated. Inactivated by phosphorylation by ran1/pat1.

In terms of biological role, crucial for commitment to meiosis but it is not sufficient itself for the commitment. May be a splicing regulator. The protein is Meiosis protein mei2 (mei2) of Schizosaccharomyces pombe (strain 972 / ATCC 24843) (Fission yeast).